The sequence spans 220 residues: MTNLFDPRSLGGQAPAGPQSRYILPSFIEHSSYGVKESNPYNKLFEERIIFLGVQVDDASANDVMAQLLVLESLDPDRDITMYINSPGGSFTSLMAIYDTMQYVRADITTVCLGQAASAAAVLLAAGSPGKRLALPNARVLIHQPATGGIQGQVSDLEIQAAEIERMRRLMETTLAKHTGKDAAVIRKDTDRDKILTAAEAKEYGIIDDVLEYRKLSAQK.

Ser118 (nucleophile) is an active-site residue. The active site involves His143.

It belongs to the peptidase S14 family. In terms of assembly, fourteen ClpP subunits assemble into 2 heptameric rings which stack back to back to give a disk-like structure with a central cavity, resembling the structure of eukaryotic proteasomes.

The protein localises to the cytoplasm. The catalysed reaction is Hydrolysis of proteins to small peptides in the presence of ATP and magnesium. alpha-casein is the usual test substrate. In the absence of ATP, only oligopeptides shorter than five residues are hydrolyzed (such as succinyl-Leu-Tyr-|-NHMec, and Leu-Tyr-Leu-|-Tyr-Trp, in which cleavage of the -Tyr-|-Leu- and -Tyr-|-Trp bonds also occurs).. Cleaves peptides in various proteins in a process that requires ATP hydrolysis. Has a chymotrypsin-like activity. Plays a major role in the degradation of misfolded proteins. This chain is ATP-dependent Clp protease proteolytic subunit 1, found in Rhodococcus jostii (strain RHA1).